We begin with the raw amino-acid sequence, 1519 residues long: DNA (cytosine-5)-methyltransferase 4 (1519 aa).

Positions Met1–Glu24 are enriched in basic and acidic residues. The tract at residues Met1–Ala31 is disordered. Residue Lys583 forms a Glycyl lysine isopeptide (Lys-Gly) (interchain with G-Cter in ubiquitin) linkage. The tract at residues Glu641 to Glu668 is disordered. Positions Asn642–Glu668 are enriched in acidic residues. BAH domains follow at residues Asp715–Pro849 and Thr916–Pro1033. One can recognise an SAM-dependent MTase C5-type domain in the interval Leu1078–Lys1512. Cys1183 is a catalytic residue.

The protein belongs to the class I-like SAM-binding methyltransferase superfamily. C5-methyltransferase family. Expressed at low levels in vegetative and floral organs.

Its subcellular location is the nucleus. The enzyme catalyses a 2'-deoxycytidine in DNA + S-adenosyl-L-methionine = a 5-methyl-2'-deoxycytidine in DNA + S-adenosyl-L-homocysteine + H(+). Its function is as follows. Maintains chromatin CpG methylation that plays a role in genomic imprinting, regulation of embryogenesis and seed viability. Required for proper patterns of CG DNA methylation in dividing cells. The polypeptide is DNA (cytosine-5)-methyltransferase 4 (MET4) (Arabidopsis thaliana (Mouse-ear cress)).